Here is a 122-residue protein sequence, read N- to C-terminus: Large ribosomal subunit protein uL14 (122 aa).

Belongs to the universal ribosomal protein uL14 family. In terms of assembly, part of the 50S ribosomal subunit. Forms a cluster with proteins L3 and L19. In the 70S ribosome, L14 and L19 interact and together make contacts with the 16S rRNA in bridges B5 and B8.

In terms of biological role, binds to 23S rRNA. Forms part of two intersubunit bridges in the 70S ribosome. The sequence is that of Large ribosomal subunit protein uL14 from Thermomicrobium roseum (strain ATCC 27502 / DSM 5159 / P-2).